The following is a 306-amino-acid chain: Recombination-associated protein RdgC (306 aa).

This sequence belongs to the RdgC family.

It is found in the cytoplasm. The protein resides in the nucleoid. In terms of biological role, may be involved in recombination. This is Recombination-associated protein RdgC from Pseudomonas syringae pv. tomato (strain ATCC BAA-871 / DC3000).